We begin with the raw amino-acid sequence, 366 residues long: Aminomethyltransferase (366 aa).

Belongs to the GcvT family. The glycine cleavage system is composed of four proteins: P, T, L and H.

It catalyses the reaction N(6)-[(R)-S(8)-aminomethyldihydrolipoyl]-L-lysyl-[protein] + (6S)-5,6,7,8-tetrahydrofolate = N(6)-[(R)-dihydrolipoyl]-L-lysyl-[protein] + (6R)-5,10-methylene-5,6,7,8-tetrahydrofolate + NH4(+). Functionally, the glycine cleavage system catalyzes the degradation of glycine. This chain is Aminomethyltransferase, found in Bordetella parapertussis (strain 12822 / ATCC BAA-587 / NCTC 13253).